Reading from the N-terminus, the 262-residue chain is Hydroxyethylthiazole kinase (262 aa).

A substrate-binding site is contributed by Met-43. ATP contacts are provided by Arg-118 and Thr-164. Ala-191 contributes to the substrate binding site.

It belongs to the Thz kinase family. Mg(2+) serves as cofactor.

It catalyses the reaction 5-(2-hydroxyethyl)-4-methylthiazole + ATP = 4-methyl-5-(2-phosphooxyethyl)-thiazole + ADP + H(+). It functions in the pathway cofactor biosynthesis; thiamine diphosphate biosynthesis; 4-methyl-5-(2-phosphoethyl)-thiazole from 5-(2-hydroxyethyl)-4-methylthiazole: step 1/1. In terms of biological role, catalyzes the phosphorylation of the hydroxyl group of 4-methyl-5-beta-hydroxyethylthiazole (THZ). In Cereibacter sphaeroides (strain ATCC 17023 / DSM 158 / JCM 6121 / CCUG 31486 / LMG 2827 / NBRC 12203 / NCIMB 8253 / ATH 2.4.1.) (Rhodobacter sphaeroides), this protein is Hydroxyethylthiazole kinase.